The chain runs to 121 residues: Large ribosomal subunit protein bL20 (121 aa).

It belongs to the bacterial ribosomal protein bL20 family.

In terms of biological role, binds directly to 23S ribosomal RNA and is necessary for the in vitro assembly process of the 50S ribosomal subunit. It is not involved in the protein synthesizing functions of that subunit. This chain is Large ribosomal subunit protein bL20, found in Wolbachia pipientis subsp. Culex pipiens (strain wPip).